Reading from the N-terminus, the 557-residue chain is D-arabinono-1,4-lactone oxidase (557 aa).

The 185-residue stretch at 25 to 209 (FLCKPQAIFQ…THVTLRTCPK (185 aa)) folds into the FAD-binding PCMH-type domain. FAD contacts are provided by residues 58 to 61 (VGSG), 62 to 63 (HS), 144 to 148 (ISTGT), Ile-199, and 543 to 546 (LSGK). His-62 is modified (pros-8alpha-FAD histidine).

This sequence belongs to the oxygen-dependent FAD-linked oxidoreductase family. FAD serves as cofactor.

The enzyme catalyses D-arabinono-1,4-lactone + O2 = dehydro-D-arabinono-1,4-lactone + H2O2 + H(+). It catalyses the reaction L-galactono-1,4-lactone + O2 = L-ascorbate + H2O2 + H(+). It carries out the reaction L-gulono-1,4-lactone + O2 = L-ascorbate + H2O2 + H(+). The catalysed reaction is L-xylono-1,4-lactone + O2 = dehydro-L-arabinono-1,4-lactone + H2O2 + H(+). The protein operates within cofactor biosynthesis; D-erythroascorbate biosynthesis; dehydro-D-arabinono-1,4-lactone from D-arabinose: step 2/2. Its function is as follows. D-arabinono-1,4-lactone oxidase that catalyzes the final step of biosynthesis of D-erythroascorbic acid, an important antioxidant and one of the virulence factors enhancing the pathogenicity. Is also able to oxidize L-galactono-1,4-lactone, L-xylono-1,4-lactone and L-gulono-1,4-lactone. The protein is D-arabinono-1,4-lactone oxidase of Candida albicans (strain SC5314 / ATCC MYA-2876) (Yeast).